The sequence spans 542 residues: MEVREVPLPATTKLAADYITGAFPAEKGFGYARTDDEAFRRRLIHLQTRTYDRHGLADYLQAYHRRFSASAATMNNIDKLRDENSVVIVGGQQAGLLTGPLYTIYKIITIIRLAKEQEQKLGVPVVPLFWIAGEDHDIAEVDHVYVVEDGEVKKVVYPHKLKEKQMAADVPLDRQLADAWIERVVKTYGETDVTNELLSFLAACLDDSHTFVDFFAAIVLRLFADDGLVVLNAGDASVRPLERRFFAALIDRHRDVTSAVLAQQEALRALGYAPLIEIAPNAANLFYYDGRERSLLHYDEESGLFRNKTGSVALTKQQLLELAEAKPACLSNNVVTRPLMQEYLLPTLAFIAGPGEIAYWAELKEVFALFGMEMPPVVPRLQATLVSRSLQTDLVDIGLEAADVLSGRLEAVKQQWLKATAEAPLTEAFAKAKADIEAAHRPLRELGVAIDRGLEGLVAKNAAIIQAQIEFLQQTLERALLSKHEVEWRKFWRVETSLRPNGAPQERVWNVFYYVNRYGFDFVEKLSAISNPGNGMHKIVYI.

Residues 458 to 487 (VAKNAAIIQAQIEFLQQTLERALLSKHEVE) are a coiled coil.

It belongs to the BshC family.

In terms of biological role, involved in bacillithiol (BSH) biosynthesis. May catalyze the last step of the pathway, the addition of cysteine to glucosamine malate (GlcN-Mal) to generate BSH. The protein is Putative cysteine ligase BshC of Geobacillus thermodenitrificans (strain NG80-2).